Reading from the N-terminus, the 240-residue chain is MVALISKKRKLVADGVFYAELNEFFTRELAEEGYSGVEVRVTPTKTEVIIRATRTQDVLGENGRRINELTLLVQKRFKYAPGTIVLYAERVQDRGLSAVAQAESMKFKLLNGLAIRRAAYGVVRYVMESGAKGCEVVVSGKLRAARAKAMKFADGFLIHSGQPVNDFIDTATRHVLMRQGVLGIKVKIMRDPAKSRTGPKALPDAVTIIEPKEEEPILAPSVKDYRPAEETEAQAEPVEA.

Residues 21 to 92 (LNEFFTRELA…TIVLYAERVQ (72 aa)) enclose the KH type-2 domain. Phosphothreonine occurs at positions 44 and 70. Residue Ser-97 is modified to Phosphoserine. A Glycyl lysine isopeptide (Lys-Gly) (interchain with G-Cter in ubiquitin) cross-link involves residue Lys-106. Residue Ser-129 is modified to Phosphoserine. Residues Lys-132 and Lys-141 each participate in a glycyl lysine isopeptide (Lys-Gly) (interchain with G-Cter in ubiquitin) cross-link. The residue at position 146 (Arg-146) is an Omega-N-methylarginine; by SFM1. Glycyl lysine isopeptide (Lys-Gly) (interchain with G-Cter in ubiquitin) cross-links involve residues Lys-151, Lys-200, and Lys-212. The interval 212 to 240 (KEEEPILAPSVKDYRPAEETEAQAEPVEA) is disordered. Ser-221 carries the phosphoserine modification. Over residues 230 to 240 (ETEAQAEPVEA) the composition is skewed to acidic residues. Phosphothreonine is present on Thr-231.

This sequence belongs to the universal ribosomal protein uS3 family. Component of the small ribosomal subunit (SSU). Mature yeast ribosomes consist of a small (40S) and a large (60S) subunit. The 40S small subunit contains 1 molecule of ribosomal RNA (18S rRNA) and 33 different proteins (encoded by 57 genes). The large 60S subunit contains 3 rRNA molecules (25S, 5.8S and 5S rRNA) and 46 different proteins (encoded by 81 genes). Ubiquitinated at Lys-212 in response to stalled ribosomes. Ubiquitination leads to activation of the No-Go Decay (NGD) pathway and degradation of non-functional 18S rRNA: first monoubiquitinated at Lys-212 by MAG2, followed by formation of 'Lys-63'-linked polyubiquitin chains on monoubiquitin by HEL2 and RSP5.

The protein resides in the cytoplasm. Its function is as follows. Component of the ribosome, a large ribonucleoprotein complex responsible for the synthesis of proteins in the cell. The small ribosomal subunit (SSU) binds messenger RNAs (mRNAs) and translates the encoded message by selecting cognate aminoacyl-transfer RNA (tRNA) molecules. The large subunit (LSU) contains the ribosomal catalytic site termed the peptidyl transferase center (PTC), which catalyzes the formation of peptide bonds, thereby polymerizing the amino acids delivered by tRNAs into a polypeptide chain. The nascent polypeptides leave the ribosome through a tunnel in the LSU and interact with protein factors that function in enzymatic processing, targeting, and the membrane insertion of nascent chains at the exit of the ribosomal tunnel. The sequence is that of Small ribosomal subunit protein uS3 from Saccharomyces cerevisiae (strain ATCC 204508 / S288c) (Baker's yeast).